The sequence spans 379 residues: Alcohol dehydrogenase 1 (379 aa).

8 residues coordinate Zn(2+): Cys-47, Thr-49, His-69, Cys-99, Cys-102, Cys-105, Cys-113, and Cys-177. Residues Thr-49 and His-69 each coordinate an alcohol. Thr-49 contributes to the NAD(+) binding site. Residues 202-207 (GLGAVG), Asp-226, Arg-231, Thr-272, Val-295, 295-297 (VGV), Phe-322, and Arg-372 contribute to the NAD(+) site.

Belongs to the zinc-containing alcohol dehydrogenase family. In terms of assembly, homodimer. Zn(2+) serves as cofactor.

The protein resides in the cytoplasm. It catalyses the reaction a primary alcohol + NAD(+) = an aldehyde + NADH + H(+). The catalysed reaction is a secondary alcohol + NAD(+) = a ketone + NADH + H(+). The chain is Alcohol dehydrogenase 1 (ADH1) from Cenchrus americanus (Pearl millet).